A 220-amino-acid polypeptide reads, in one-letter code: Adenylate kinase (220 aa).

ATP is bound at residue 10–15 (GSGKST). Positions 30–59 (SSGDIIRAEISSRTPLGLEMEKYLSRGDLI) are NMP. AMP-binding positions include S31, R36, 57–59 (DLI), 83–86 (GYPR), and Q90. Positions 124 to 161 (GRRICSKCGAVYHIEFNPPKIPGKCDICGGDLIQRPDD) are LID. R125 lines the ATP pocket. Zn(2+)-binding residues include C128 and C131. Position 134-135 (134-135 (VY)) interacts with ATP. Zn(2+) is bound by residues C148 and C151. 2 residues coordinate AMP: R158 and R169. Position 197 (G197) interacts with ATP.

Belongs to the adenylate kinase family. In terms of assembly, monomer.

The protein localises to the cytoplasm. It carries out the reaction AMP + ATP = 2 ADP. It functions in the pathway purine metabolism; AMP biosynthesis via salvage pathway; AMP from ADP: step 1/1. Functionally, catalyzes the reversible transfer of the terminal phosphate group between ATP and AMP. Plays an important role in cellular energy homeostasis and in adenine nucleotide metabolism. The polypeptide is Adenylate kinase (Pyrococcus horikoshii (strain ATCC 700860 / DSM 12428 / JCM 9974 / NBRC 100139 / OT-3)).